The primary structure comprises 318 residues: Olfactory receptor 13C2 (318 aa).

The Extracellular portion of the chain corresponds to 1–25 (MEWENHTILVEFFLKGLSGHPRLEL). A glycan (N-linked (GlcNAc...) asparagine) is linked at N5. Residues 26 to 46 (LFFVLIFIMYVVILLGNGTLI) traverse the membrane as a helical segment. Topologically, residues 47–54 (LISILDPH) are cytoplasmic. The chain crosses the membrane as a helical span at residues 55–75 (LHTPMYFFLGNLSFLDICYTT). The Extracellular segment spans residues 76–99 (TSIPSTLVSFLSERKTISLSGCAV). A disulfide bridge links C97 with C189. A helical transmembrane segment spans residues 100-120 (QMFLGLAMGTTECVLLGMMAF). Residues 121 to 139 (DRYVAICNPLRYPIIMSKD) are Cytoplasmic-facing. A helical transmembrane segment spans residues 140-160 (AYVPMAAGSWIIGAVNSAVQS). The Extracellular portion of the chain corresponds to 161–197 (VFVVQLPFCRNNIINHFTCEILAVMKLACADISDNEF). A helical membrane pass occupies residues 198-217 (IMLVATTLFILTPLLLIIVS). Residues 218–237 (YTLIIVSIFKISSSEGRSKA) are Cytoplasmic-facing. The chain crosses the membrane as a helical span at residues 238–258 (SSTCSAHLTVVIIFYGTILFM). The Extracellular portion of the chain corresponds to 259–277 (YMKPKSKETLNSDDLDATD). The chain crosses the membrane as a helical span at residues 278-298 (KIISMFYGVMTPMMNPLIYSL). Residues 299–318 (RNKDVKEAVKHLLNRRFFSK) lie on the Cytoplasmic side of the membrane.

Belongs to the G-protein coupled receptor 1 family.

The protein localises to the cell membrane. Functionally, odorant receptor. This Homo sapiens (Human) protein is Olfactory receptor 13C2 (OR13C2).